The sequence spans 132 residues: U-scoloptoxin(11)-Sa1a (132 aa).

A signal peptide spans 1 to 19 (MIRFFAFVLFFATQELILC).

This sequence belongs to the scoloptoxin-11 family. Post-translationally, contains 5 disulfide bonds. In terms of tissue distribution, expressed by the venom gland.

It localises to the secreted. This is U-scoloptoxin(11)-Sa1a from Scolopendra alternans (Florida Keys giant centipede).